A 788-amino-acid chain; its full sequence is Protein HID1 (788 aa).

Gly2 is lipidated: N-myristoyl glycine. Over residues 297 to 313 the composition is skewed to low complexity; sequence ATSTSPTVDGTTTGTAM. Disordered regions lie at residues 297 to 316 and 571 to 680; these read ATST…MDDA and PPSI…QWSP. Composition is skewed to polar residues over residues 590-600 and 643-680; these read RTGSQEGTSME and PESQ…QWSP. Ser653 and Ser670 each carry phosphoserine.

The protein belongs to the hid-1 family.

Its subcellular location is the cytoplasm. The protein localises to the golgi apparatus membrane. This chain is Protein HID1 (Hid1), found in Mus musculus (Mouse).